Reading from the N-terminus, the 392-residue chain is Proteasome-activating nucleotidase (392 aa).

A coiled-coil region spans residues 19–53 (IVRLLEEKIESLTKELEKLRQDLNWYKGELEKLLA). Residues 178–183 (GTGKTL) and Tyr317 contribute to the ATP site. Residues 390-392 (KYV) form a docks into pockets in the proteasome alpha-ring to cause gate opening region.

This sequence belongs to the AAA ATPase family. As to quaternary structure, homohexamer. The hexameric complex has a two-ring architecture resembling a top hat that caps the 20S proteasome core at one or both ends. Upon ATP-binding, the C-terminus of PAN interacts with the alpha-rings of the proteasome core by binding to the intersubunit pockets.

The protein localises to the cytoplasm. Its function is as follows. ATPase which is responsible for recognizing, binding, unfolding and translocation of substrate proteins into the archaeal 20S proteasome core particle. Is essential for opening the gate of the 20S proteasome via an interaction with its C-terminus, thereby allowing substrate entry and access to the site of proteolysis. Thus, the C-termini of the proteasomal ATPase function like a 'key in a lock' to induce gate opening and therefore regulate proteolysis. Unfolding activity requires energy from ATP hydrolysis, whereas ATP binding alone promotes ATPase-20S proteasome association which triggers gate opening, and supports translocation of unfolded substrates. The chain is Proteasome-activating nucleotidase from Sulfurisphaera tokodaii (strain DSM 16993 / JCM 10545 / NBRC 100140 / 7) (Sulfolobus tokodaii).